The following is an 80-amino-acid chain: Caltrin (80 aa).

A signal peptide spans 1–32; the sequence is MMAGRRSWPAMATVLLALLVCLGELVDSKPQP.

Its function is as follows. Inhibits calcium transport into spermatozoa; it does not bind directly to calcium. Binds to calmodulin. Inhibits the growth of microorganisms. Seem to act as an antibiotic by permeabilizing the bacterial membrane. This is Caltrin (PYY2) from Bos taurus (Bovine).